Reading from the N-terminus, the 143-residue chain is Transcriptional regulator MraZ (143 aa).

SpoVT-AbrB domains follow at residues 5 to 47 and 76 to 119; these read EYQH…PMHE and ATEC…SKVI.

This sequence belongs to the MraZ family. As to quaternary structure, forms oligomers.

It localises to the cytoplasm. It is found in the nucleoid. The protein is Transcriptional regulator MraZ of Bacillus subtilis (strain 168).